Here is a 217-residue protein sequence, read N- to C-terminus: tRNA (guanine-N(7)-)-methyltransferase (217 aa).

S-adenosyl-L-methionine contacts are provided by glutamate 46, glutamate 71, aspartate 98, and aspartate 120. The active site involves aspartate 120. A substrate-binding site is contributed by lysine 124. The interval 126–131 is interaction with RNA; it reads RHEKRR. Residues aspartate 156 and 196–199 contribute to the substrate site; that span reads TEYE.

Belongs to the class I-like SAM-binding methyltransferase superfamily. TrmB family.

It catalyses the reaction guanosine(46) in tRNA + S-adenosyl-L-methionine = N(7)-methylguanosine(46) in tRNA + S-adenosyl-L-homocysteine. It functions in the pathway tRNA modification; N(7)-methylguanine-tRNA biosynthesis. Catalyzes the formation of N(7)-methylguanine at position 46 (m7G46) in tRNA. This chain is tRNA (guanine-N(7)-)-methyltransferase, found in Lactobacillus gasseri (strain ATCC 33323 / DSM 20243 / BCRC 14619 / CIP 102991 / JCM 1131 / KCTC 3163 / NCIMB 11718 / NCTC 13722 / AM63).